We begin with the raw amino-acid sequence, 97 residues long: Co-chaperonin GroES (97 aa).

It belongs to the GroES chaperonin family. In terms of assembly, heptamer of 7 subunits arranged in a ring. Interacts with the chaperonin GroEL.

Its subcellular location is the cytoplasm. Together with the chaperonin GroEL, plays an essential role in assisting protein folding. The GroEL-GroES system forms a nano-cage that allows encapsulation of the non-native substrate proteins and provides a physical environment optimized to promote and accelerate protein folding. GroES binds to the apical surface of the GroEL ring, thereby capping the opening of the GroEL channel. This Pseudomonas fluorescens (strain ATCC BAA-477 / NRRL B-23932 / Pf-5) protein is Co-chaperonin GroES.